The primary structure comprises 526 residues: Threonine synthase 1, chloroplastic (526 aa).

A chloroplast-targeting transit peptide spans 1-40 (MASSCLFNASVSSLNPKQDPIRRHRSTSLLRHRPVVISCT). S-adenosyl-L-methionine is bound by residues 142–144 (PYG), 165–167 (SAF), Asn-172, Leu-173, Lys-181, and Asn-187. Lys-203 is modified (N6-(pyridoxal phosphate)lysine). Pyridoxal 5'-phosphate-binding positions include 335–339 (GNLGN) and Thr-472.

This sequence belongs to the threonine synthase family. Homodimer. Pyridoxal 5'-phosphate serves as cofactor.

The protein localises to the plastid. The protein resides in the chloroplast. The catalysed reaction is O-phospho-L-homoserine + H2O = L-threonine + phosphate. Its pathway is amino-acid biosynthesis; L-threonine biosynthesis; L-threonine from L-aspartate: step 5/5. Its activity is regulated as follows. Allosterically activated by S-adenosyl-L-methionine (SAM). Activated by S-adenosyl-L-ethionine, 5'-amino-5'-deoxyadenosine, sinefungin and 5'-deoxy-5-methylthioadenosine. Inhibited by AMP. Its function is as follows. Catalyzes the gamma-elimination of phosphate from L-phosphohomoserine and the beta-addition of water to produce L-threonine. The chain is Threonine synthase 1, chloroplastic (TS1) from Arabidopsis thaliana (Mouse-ear cress).